Consider the following 273-residue polypeptide: 4-hydroxy-tetrahydrodipicolinate reductase (273 aa).

NAD(+) contacts are provided by residues 12-17 (GAGGRM) and E38. Position 39 (R39) interacts with NADP(+). Residues 102-104 (GTT) and 126-129 (AANF) each bind NAD(+). Catalysis depends on H159, which acts as the Proton donor/acceptor. Residue H160 participates in (S)-2,3,4,5-tetrahydrodipicolinate binding. K163 functions as the Proton donor in the catalytic mechanism. 169 to 170 (GT) is a (S)-2,3,4,5-tetrahydrodipicolinate binding site.

Belongs to the DapB family. As to quaternary structure, homotetramer.

It is found in the cytoplasm. The catalysed reaction is (S)-2,3,4,5-tetrahydrodipicolinate + NAD(+) + H2O = (2S,4S)-4-hydroxy-2,3,4,5-tetrahydrodipicolinate + NADH + H(+). The enzyme catalyses (S)-2,3,4,5-tetrahydrodipicolinate + NADP(+) + H2O = (2S,4S)-4-hydroxy-2,3,4,5-tetrahydrodipicolinate + NADPH + H(+). The protein operates within amino-acid biosynthesis; L-lysine biosynthesis via DAP pathway; (S)-tetrahydrodipicolinate from L-aspartate: step 4/4. In terms of biological role, catalyzes the conversion of 4-hydroxy-tetrahydrodipicolinate (HTPA) to tetrahydrodipicolinate. The sequence is that of 4-hydroxy-tetrahydrodipicolinate reductase from Shigella sonnei (strain Ss046).